The sequence spans 328 residues: Putative lipase LIH1 (328 aa).

The Nucleophile role is filled by S181. Active-site charge relay system residues include D253 and H315.

The protein belongs to the AB hydrolase superfamily. Lipase family.

The enzyme catalyses a triacylglycerol + H2O = a diacylglycerol + a fatty acid + H(+). In terms of biological role, lipases catalyze the hydrolysis of the ester bond of tri-, di- and monoglycerides of long-chain fatty acids into fatty acids and glycerol. The polypeptide is Putative lipase LIH1 (Saccharomyces cerevisiae (strain ATCC 204508 / S288c) (Baker's yeast)).